The primary structure comprises 139 residues: Cystatin cpi-1 (139 aa).

Residues Met1–Cys19 form the signal peptide. Asn29 carries an N-linked (GlcNAc...) asparagine glycan. The Secondary area of contact motif lies at Gln65–Gly69. Residues Cys83 and Cys99 are joined by a disulfide bond.

This sequence belongs to the cystatin family.

In terms of biological role, cysteine protease inhibitor which inhibits members of the peptidase C1 family. Does not inhibit asparaginyl endopeptidase. May play a protective role against exogenous cysteine proteases derived from soil bacteria or fungi, or rotting fruits and vegetation. In Caenorhabditis elegans, this protein is Cystatin cpi-1.